The following is a 466-amino-acid chain: Cysteine--tRNA ligase (466 aa).

Residue C27 coordinates Zn(2+). The 'HIGH' region signature appears at 29–39 (PTVYNYFHIGN). C207, H232, and E236 together coordinate Zn(2+). The 'KMSKS' region signature appears at 264–268 (KMSKS). Position 267 (K267) interacts with ATP.

The protein belongs to the class-I aminoacyl-tRNA synthetase family. As to quaternary structure, monomer. Zn(2+) is required as a cofactor.

It is found in the cytoplasm. It catalyses the reaction tRNA(Cys) + L-cysteine + ATP = L-cysteinyl-tRNA(Cys) + AMP + diphosphate. The sequence is that of Cysteine--tRNA ligase from Clostridium novyi (strain NT).